Here is a 285-residue protein sequence, read N- to C-terminus: 3',5'-nucleoside bisphosphate phosphatase (285 aa).

Histidine 7, histidine 9, aspartate 14, histidine 39, glutamate 64, and histidine 75 together coordinate Mn(2+). Substrate is bound by residues aspartate 14 and histidine 39. Residues 99 to 102 (RLER) and 134 to 135 (RT) contribute to the substrate site. Positions 191, 248, and 250 each coordinate Mn(2+). A substrate-binding site is contributed by histidine 250.

The protein belongs to the PHP family. In terms of assembly, monomer. Requires Mn(2+) as cofactor.

The catalysed reaction is a ribonucleoside 3',5'-bisphosphate + H2O = a ribonucleoside 5'-phosphate + phosphate. Its function is as follows. Hydrolyzes 3',5'-bisphosphonucleosides (pGp, pCp, pUp, and pIp) to nucleoside 5'-phosphate and orthophosphate. Has similar catalytic efficiencies with all the bases. Also shows activity with ribonucleoside 2'-deoxyribonucleoside 3',5'-bisphosphates. Does not show activity with nucleoside 2',5'-bisphosphates. This is 3',5'-nucleoside bisphosphate phosphatase from Chromobacterium violaceum (strain ATCC 12472 / DSM 30191 / JCM 1249 / CCUG 213 / NBRC 12614 / NCIMB 9131 / NCTC 9757 / MK).